Here is a 326-residue protein sequence, read N- to C-terminus: Dehydrogenase/reductase SDR family protein 7-like (326 aa).

The Cytoplasmic portion of the chain corresponds to 1–17 (MKVQDMDKCAPSSDWNV). A helical; Signal-anchor for type II membrane protein transmembrane segment spans residues 18–38 (LYWVLGTVLMPVALPLAIINI). At 39–326 (WQRFQAQKFR…KLENAEKKST (288 aa)) the chain is on the peroxisomal side. 57–81 (LITGASSGLGESLAHVFYRAGCRVI) contributes to the NAD(+) binding site. A substrate-binding site is contributed by Ser193. Residue Tyr206 is the Proton acceptor of the active site.

The protein belongs to the short-chain dehydrogenases/reductases (SDR) family.

The protein resides in the peroxisome membrane. In terms of biological role, putative oxidoreductase. The polypeptide is Dehydrogenase/reductase SDR family protein 7-like (Drosophila melanogaster (Fruit fly)).